A 132-amino-acid chain; its full sequence is Small ribosomal subunit protein uS8c (132 aa).

The protein belongs to the universal ribosomal protein uS8 family. As to quaternary structure, part of the 30S ribosomal subunit.

The protein resides in the plastid. It is found in the chloroplast. Its function is as follows. One of the primary rRNA binding proteins, it binds directly to 16S rRNA central domain where it helps coordinate assembly of the platform of the 30S subunit. The protein is Small ribosomal subunit protein uS8c (rps8) of Buxus microphylla (Littleleaf boxwood).